A 96-amino-acid polypeptide reads, in one-letter code: Large ribosomal subunit protein bL28 (96 aa).

The disordered stretch occupies residues 1–22 (MSRRCELTGKGPMTGNNVSHAN).

The protein belongs to the bacterial ribosomal protein bL28 family.

The chain is Large ribosomal subunit protein bL28 from Ruegeria sp. (strain TM1040) (Silicibacter sp.).